A 625-amino-acid chain; its full sequence is Phosphomethylpyrimidine synthase (625 aa).

Residues asparagine 237, methionine 266, tyrosine 295, histidine 331, 351–353, 392–395, and glutamate 431 contribute to the substrate site; these read SRG and DGLR. Residue histidine 435 coordinates Zn(2+). Position 458 (tyrosine 458) interacts with substrate. A Zn(2+)-binding site is contributed by histidine 499. Cysteine 579, cysteine 582, and cysteine 587 together coordinate [4Fe-4S] cluster.

The protein belongs to the ThiC family. As to quaternary structure, homodimer. [4Fe-4S] cluster serves as cofactor.

The enzyme catalyses 5-amino-1-(5-phospho-beta-D-ribosyl)imidazole + S-adenosyl-L-methionine = 4-amino-2-methyl-5-(phosphooxymethyl)pyrimidine + CO + 5'-deoxyadenosine + formate + L-methionine + 3 H(+). It functions in the pathway cofactor biosynthesis; thiamine diphosphate biosynthesis. Its function is as follows. Catalyzes the synthesis of the hydroxymethylpyrimidine phosphate (HMP-P) moiety of thiamine from aminoimidazole ribotide (AIR) in a radical S-adenosyl-L-methionine (SAM)-dependent reaction. This Cupriavidus metallidurans (strain ATCC 43123 / DSM 2839 / NBRC 102507 / CH34) (Ralstonia metallidurans) protein is Phosphomethylpyrimidine synthase.